The primary structure comprises 89 residues: Small ribosomal subunit protein eS25A (89 aa).

The protein belongs to the eukaryotic ribosomal protein eS25 family. Component of the small ribosomal subunit (SSU). Mature yeast ribosomes consist of a small (40S) and a large (60S) subunit. The 40S small subunit contains 1 molecule of ribosomal RNA (18S rRNA) and at least 33 different proteins. The large 60S subunit contains 3 rRNA molecules (25S, 5.8S and 5S rRNA) and at least 46 different proteins.

The protein localises to the cytoplasm. In terms of biological role, component of the ribosome, a large ribonucleoprotein complex responsible for the synthesis of proteins in the cell. The small ribosomal subunit (SSU) binds messenger RNAs (mRNAs) and translates the encoded message by selecting cognate aminoacyl-transfer RNA (tRNA) molecules. The large subunit (LSU) contains the ribosomal catalytic site termed the peptidyl transferase center (PTC), which catalyzes the formation of peptide bonds, thereby polymerizing the amino acids delivered by tRNAs into a polypeptide chain. The nascent polypeptides leave the ribosome through a tunnel in the LSU and interact with protein factors that function in enzymatic processing, targeting, and the membrane insertion of nascent chains at the exit of the ribosomal tunnel. In Schizosaccharomyces pombe (strain 972 / ATCC 24843) (Fission yeast), this protein is Small ribosomal subunit protein eS25A (rps2502).